The sequence spans 701 residues: MFVILHNKLIIYYLDMSNNKEILNRIQNLRKNLNQYNYEYYGLENPSVSDYEYDMCLKELIQLETQYPEFDSPNSPSKKVGGYISEKFNKVKHEIPMMSLSNAFDEEDLLKFDNDIKKAIGSSDFSYVVEPKIDGLSISVKYKDGNLIQAVTRGDGEIGEDVTQNIKTIKSLPLNIEYDKDLEIRGEVFLTKKDFEKINSDPNLTKKFANARNAASGSLRNLDSNITAKRNLSALFYYVPKATELKIAKQYDVLSWLDKQLIPISREIRHCNNIQGVIERISELTDTRDQFKYDIDGIVIKVNDFNHYEEIGYTSKFPKWAIAYKFPAVVKQTKLNSIDVTVGRTGRINYIANLDEILLEGSQVKKATLHNYDYIKDHEIMLNDIVEIYKAGEIIPKIIRSIKEKRDGSQVVFPEPTNCPSCDSKLVKKEQEVDLYCLNENCVEKQIQQIEYFSSRDAMNIEGLSISIISQLFRNKIINDAIDLYELAHKKEILIATKQKFYRKNDDGTKTEFERSLFKDKSFTNIIEAIEKSKSNSMEKFLTGLGIKYVGLRAAKALSKRFKSIEELAMATREEIEQVPDTGEKMSESLVNWFSDPKNQDLLWRAKKVGINFNYINEFNDVVVKNEHQKYMNKTFVITGSFNKSRNEIKNYIESVFNAKVSDSVSKKTDYLVVGENAGDSKLKKANDLKIEIITEPFWDN.

Residues 50-54 (DYEYD), 99-100 (SL), and Glu130 each bind NAD(+). Residue Lys132 is the N6-AMP-lysine intermediate of the active site. NAD(+) is bound by residues Arg153, Glu187, Lys301, and Lys325. Residues Cys419, Cys422, Cys437, and Cys442 each coordinate Zn(2+). Positions 626 to 701 (NEHQKYMNKT…EIITEPFWDN (76 aa)) constitute a BRCT domain.

The protein belongs to the NAD-dependent DNA ligase family. LigA subfamily. Mg(2+) is required as a cofactor. Mn(2+) serves as cofactor.

The catalysed reaction is NAD(+) + (deoxyribonucleotide)n-3'-hydroxyl + 5'-phospho-(deoxyribonucleotide)m = (deoxyribonucleotide)n+m + AMP + beta-nicotinamide D-nucleotide.. Functionally, DNA ligase that catalyzes the formation of phosphodiester linkages between 5'-phosphoryl and 3'-hydroxyl groups in double-stranded DNA using NAD as a coenzyme and as the energy source for the reaction. It is essential for DNA replication and repair of damaged DNA. The protein is DNA ligase of Malacoplasma penetrans (strain HF-2) (Mycoplasma penetrans).